A 446-amino-acid polypeptide reads, in one-letter code: Phosphoglucosamine mutase (446 aa).

The Phosphoserine intermediate role is filled by Ser99. Residues Ser99, Asp242, Asp244, and Asp246 each coordinate Mg(2+). At Ser99 the chain carries Phosphoserine.

The protein belongs to the phosphohexose mutase family. Mg(2+) serves as cofactor. Activated by phosphorylation.

It catalyses the reaction alpha-D-glucosamine 1-phosphate = D-glucosamine 6-phosphate. Functionally, catalyzes the conversion of glucosamine-6-phosphate to glucosamine-1-phosphate. This is Phosphoglucosamine mutase from Campylobacter concisus (strain 13826).